Reading from the N-terminus, the 257-residue chain is NAD kinase (257 aa).

Asp46 functions as the Proton acceptor in the catalytic mechanism. Residues 46–47, 116–117, Asp146, Ala154, 157–162, and Asn218 each bind NAD(+); these read DG, NE, and TAYNLS.

This sequence belongs to the NAD kinase family. A divalent metal cation serves as cofactor.

Its subcellular location is the cytoplasm. The catalysed reaction is NAD(+) + ATP = ADP + NADP(+) + H(+). Its function is as follows. Involved in the regulation of the intracellular balance of NAD and NADP, and is a key enzyme in the biosynthesis of NADP. Catalyzes specifically the phosphorylation on 2'-hydroxyl of the adenosine moiety of NAD to yield NADP. The chain is NAD kinase from Brucella melitensis biotype 1 (strain ATCC 23456 / CCUG 17765 / NCTC 10094 / 16M).